Reading from the N-terminus, the 258-residue chain is Imidazole glycerol phosphate synthase subunit HisF (258 aa).

Active-site residues include aspartate 11 and aspartate 130.

Belongs to the HisA/HisF family. In terms of assembly, heterodimer of HisH and HisF.

The protein resides in the cytoplasm. It catalyses the reaction 5-[(5-phospho-1-deoxy-D-ribulos-1-ylimino)methylamino]-1-(5-phospho-beta-D-ribosyl)imidazole-4-carboxamide + L-glutamine = D-erythro-1-(imidazol-4-yl)glycerol 3-phosphate + 5-amino-1-(5-phospho-beta-D-ribosyl)imidazole-4-carboxamide + L-glutamate + H(+). The protein operates within amino-acid biosynthesis; L-histidine biosynthesis; L-histidine from 5-phospho-alpha-D-ribose 1-diphosphate: step 5/9. Functionally, IGPS catalyzes the conversion of PRFAR and glutamine to IGP, AICAR and glutamate. The HisF subunit catalyzes the cyclization activity that produces IGP and AICAR from PRFAR using the ammonia provided by the HisH subunit. The chain is Imidazole glycerol phosphate synthase subunit HisF from Yersinia pseudotuberculosis serotype IB (strain PB1/+).